A 452-amino-acid chain; its full sequence is Probable diguanylate cyclase DgcT (452 aa).

Residues 1–7 are Cytoplasmic-facing; sequence MEKDYLR. The chain crosses the membrane as a helical span at residues 8–28; sequence ISSTVLVSLLFGLALVLVNSW. At 29-45 the chain is on the periplasmic side; it reads FNQPGVEEVVPRSTYLM. The chain crosses the membrane as a helical span at residues 46–66; that stretch reads VMIALFFIDTVAFIFMQLYFI. Over 67–74 the chain is Cytoplasmic; sequence YDRRQFSN. A helical membrane pass occupies residues 75–95; it reads CVLSLAFLSCLIYFVITVIII. Residues 96-111 lie on the Periplasmic side of the membrane; that stretch reads QQIIEERLTSSVVQND. A helical transmembrane segment spans residues 112–132; it reads IAIYYLFRQMSLCILIFLALV. The Cytoplasmic segment spans residues 133–148; that stretch reads NKVSENTKQRNLFSKK. Residues 149–169 form a helical membrane-spanning segment; that stretch reads MTLCISLFFVFGGPIVAHILS. Topologically, residues 170 to 195 are periplasmic; the sequence is SHYESYNLHIAELTNENGQVVWKASY. The chain crosses the membrane as a helical span at residues 196–216; the sequence is VTIMIFMWLTLLSVNLYFNGL. Residues 217 to 219 are Cytoplasmic-facing; it reads RYD. Residues 220 to 240 traverse the membrane as a helical segment; sequence IWNGVTVIAFCAVLYNISLLF. At 241-254 the chain is on the periplasmic side; the sequence is MSRYSVSTWYISRT. The helical transmembrane segment at 255 to 275 threads the bilayer; that stretch reads IEVVSKLTVMVIFMCHIFSAL. At 276 to 452 the chain is on the cytoplasmic side; sequence RVTKNIAHRD…RDVVNFCESP (177 aa). A GGDEF domain is found at 310–445; the sequence is TPYCVMIMDI…GRNKVVVRDV (136 aa). Asp-318 and Ile-319 together coordinate Mg(2+). Substrate is bound by residues Asn-326, His-331, and Asp-335. Glu-361 is a binding site for Mg(2+). Residue Glu-361 is the Proton acceptor of the active site. Substrate is bound at residue Arg-381.

Homodimer. The cofactor is Mg(2+).

The protein localises to the cell inner membrane. The enzyme catalyses 2 GTP = 3',3'-c-di-GMP + 2 diphosphate. Its pathway is purine metabolism; 3',5'-cyclic di-GMP biosynthesis. Functionally, probably catalyzes the synthesis of cyclic-di-GMP (c-di-GMP) via the condensation of 2 GTP molecules. Overexpression leads to a strong repression of swimming; swimming returns to normal when residues 359-360 are both mutated to Ala. Overexpression also leads to a 20-fold increase in c-di-GMP levels in vivo. Cyclic-di-GMP is a second messenger which controls cell surface-associated traits in bacteria. The sequence is that of Probable diguanylate cyclase DgcT from Escherichia coli (strain K12).